Here is a 304-residue protein sequence, read N- to C-terminus: Probable 5-dehydro-4-deoxyglucarate dehydratase (304 aa).

It belongs to the DapA family.

It carries out the reaction 5-dehydro-4-deoxy-D-glucarate + H(+) = 2,5-dioxopentanoate + CO2 + H2O. The protein operates within carbohydrate acid metabolism; D-glucarate degradation; 2,5-dioxopentanoate from D-glucarate: step 2/2. In Methylobacterium radiotolerans (strain ATCC 27329 / DSM 1819 / JCM 2831 / NBRC 15690 / NCIMB 10815 / 0-1), this protein is Probable 5-dehydro-4-deoxyglucarate dehydratase.